Consider the following 129-residue polypeptide: M-zodatoxin-Lt8c (129 aa).

Residues 1–20 (MKYFVVALALVAAFACIAES) form the signal peptide. A propeptide spanning residues 21–60 (KPAESEHELAEVEEENELADLEDAVWLEHLADLSDLEEAR) is cleaved from the precursor. Residues 57-60 (EEAR) carry the Processing quadruplet motif motif.

Cleavage of the propeptide depends on the processing quadruplet motif (XXXR, with at least one of X being E). Expressed by the venom gland.

The protein localises to the secreted. In terms of biological role, insecticidal, cytolytic and antimicrobial peptide. Forms voltage-dependent, ion-permeable channels in membranes. At high concentration causes cell membrane lysis. The protein is M-zodatoxin-Lt8c (cit 1-3) of Lachesana tarabaevi (Spider).